We begin with the raw amino-acid sequence, 109 residues long: Somatostatin-2 (109 aa).

The signal sequence occupies residues 1 to 16; the sequence is MQFLASLVSFLLVVWS. Positions 17 to 80 are excised as a propeptide; sequence VKATALPVED…EPLENKLEER (64 aa). Cysteine 98 and cysteine 109 are joined by a disulfide.

The protein belongs to the somatostatin family.

Its subcellular location is the secreted. Its function is as follows. Somatostatin inhibits the release of somatotropin. The polypeptide is Somatostatin-2 (sst2) (Protopterus annectens (African lungfish)).